The primary structure comprises 402 residues: UDP-GlcNAc:betaGal beta-1,3-N-acetylglucosaminyltransferase 9 (402 aa).

Residues 1-10 (MRRRLRLRRD) lie on the Cytoplasmic side of the membrane. Residues 11–27 (ALLTLLLGASLGLLLYA) form a helical; Signal-anchor for type II membrane protein membrane-spanning segment. At 28–402 (QRDGAAPTAS…VAAGPFQWDS (375 aa)) the chain is on the lumenal side. Over residues 32 to 47 (AAPTASAPRGRGRAAP) the composition is skewed to low complexity. The segment at 32–83 (AAPTASAPRGRGRAAPRPTPGPRAFQLPDAGAAPPAYEGDTPAPPTPTGPFD) is disordered.

The protein belongs to the glycosyltransferase 31 family.

The protein resides in the golgi apparatus membrane. This is UDP-GlcNAc:betaGal beta-1,3-N-acetylglucosaminyltransferase 9 from Homo sapiens (Human).